The primary structure comprises 434 residues: Glutamate-1-semialdehyde 2,1-aminomutase 1 (434 aa).

K268 is modified (N6-(pyridoxal phosphate)lysine).

This sequence belongs to the class-III pyridoxal-phosphate-dependent aminotransferase family. HemL subfamily. Homodimer. Pyridoxal 5'-phosphate serves as cofactor.

The protein resides in the cytoplasm. The enzyme catalyses (S)-4-amino-5-oxopentanoate = 5-aminolevulinate. It functions in the pathway porphyrin-containing compound metabolism; protoporphyrin-IX biosynthesis; 5-aminolevulinate from L-glutamyl-tRNA(Glu): step 2/2. The sequence is that of Glutamate-1-semialdehyde 2,1-aminomutase 1 from Shouchella clausii (strain KSM-K16) (Alkalihalobacillus clausii).